Here is a 413-residue protein sequence, read N- to C-terminus: Multifunctional CCA protein (413 aa).

2 residues coordinate ATP: Gly8 and Arg11. 2 residues coordinate CTP: Gly8 and Arg11. 2 residues coordinate Mg(2+): Asp21 and Asp23. Arg91, Arg137, and Arg140 together coordinate ATP. Arg91, Arg137, and Arg140 together coordinate CTP. In terms of domain architecture, HD spans 228 to 329 (TGIHTLMTLS…VKLFDSIDAW (102 aa)).

The protein belongs to the tRNA nucleotidyltransferase/poly(A) polymerase family. Bacterial CCA-adding enzyme type 1 subfamily. As to quaternary structure, monomer. Can also form homodimers and oligomers. The cofactor is Mg(2+). It depends on Ni(2+) as a cofactor.

The enzyme catalyses a tRNA precursor + 2 CTP + ATP = a tRNA with a 3' CCA end + 3 diphosphate. It carries out the reaction a tRNA with a 3' CCA end + 2 CTP + ATP = a tRNA with a 3' CCACCA end + 3 diphosphate. Catalyzes the addition and repair of the essential 3'-terminal CCA sequence in tRNAs without using a nucleic acid template. Adds these three nucleotides in the order of C, C, and A to the tRNA nucleotide-73, using CTP and ATP as substrates and producing inorganic pyrophosphate. tRNA 3'-terminal CCA addition is required both for tRNA processing and repair. Also involved in tRNA surveillance by mediating tandem CCA addition to generate a CCACCA at the 3' terminus of unstable tRNAs. While stable tRNAs receive only 3'-terminal CCA, unstable tRNAs are marked with CCACCA and rapidly degraded. In Citrobacter koseri (strain ATCC BAA-895 / CDC 4225-83 / SGSC4696), this protein is Multifunctional CCA protein.